The sequence spans 1096 residues: Pentatricopeptide repeat-containing protein At5g55840 (1096 aa).

27 PPR repeats span residues 122–156 (NPSV…GFNP), 157–191 (SVYT…KICP), 192–226 (DVAT…GYAP), 227–261 (TIVT…GVDA), 262–296 (DVCT…MIHP), 297–331 (NEVT…GLSP), 332–366 (NHVT…GLTP), 367–401 (SEVS…GVCV), 402–436 (GRIT…GIDP), 437–471 (DIVT…GLSP), 472–506 (NGII…GHTR), 507–541 (DHFT…GILP), 542–576 (NTVS…GHHP), 577–607 (TFFT…LHAV), 612–646 (DTVM…SILP), 647–681 (DSYT…GNVL), 683–717 (NKVM…GHTP), 718–752 (DIVT…NGGP), 753–787 (NLTT…GILP), 788–822 (DKLT…GVEV), 823–857 (DRYT…GISL), 858–892 (DKDT…GISP), 893–927 (ESRK…KICP), 928–962 (PNVA…KLVP), 963–997 (TIAS…GLKL), 998–1032 (DLVS…GFLA), and 1033–1068 (NATT…GFIT).

Belongs to the PPR family. P subfamily.

This is Pentatricopeptide repeat-containing protein At5g55840 from Arabidopsis thaliana (Mouse-ear cress).